The chain runs to 616 residues: Angiotensin-converting enzyme (616 aa).

An N-terminal signal peptide occupies residues 1–23; that stretch reads MNLINFSYLNLLFGAGLFSVLES. Residues 27 to 610 form the Peptidase M2 domain; sequence LNTESDAKKW…PRAENWMGGK (584 aa). Residues asparagine 61 and asparagine 96 are each glycosylated (N-linked (GlcNAc...) asparagine). Cysteine 142 and cysteine 152 are disulfide-bonded. Chloride is bound by residues arginine 180 and tyrosine 218. The N-linked (GlcNAc...) asparagine glycan is linked to asparagine 303. Cysteine 345 and cysteine 363 form a disulfide bridge. Histidine 376 contacts Zn(2+). Glutamate 377 acts as the Proton acceptor in catalysis. Zn(2+) is bound by residues histidine 380 and glutamate 404. An N-linked (GlcNAc...) asparagine glycan is attached at asparagine 428. Tryptophan 478 and arginine 482 together coordinate chloride. Catalysis depends on histidine 506, which acts as the Proton donor. Residue arginine 515 participates in chloride binding. Cysteine 531 and cysteine 543 are joined by a disulfide. Asparagine 535 and asparagine 573 each carry an N-linked (GlcNAc...) asparagine glycan.

The protein belongs to the peptidase M2 family. Zn(2+) serves as cofactor. The cofactor is chloride. In terms of tissue distribution, epithelial cells of the midgut.

The protein localises to the secreted. It localises to the extracellular space. The enzyme catalyses Release of a C-terminal dipeptide, oligopeptide-|-Xaa-Yaa, when Xaa is not Pro, and Yaa is neither Asp nor Glu. Thus, conversion of angiotensin I to angiotensin II, with increase in vasoconstrictor activity, but no action on angiotensin II.. With respect to regulation, activated by chloride. Inhibited by captopril and lisinopril, and to a lesser extent by delaprilat. In Theromyzon tessulatum (Duck leech), this protein is Angiotensin-converting enzyme (ACE).